We begin with the raw amino-acid sequence, 317 residues long: tRNA dimethylallyltransferase (317 aa).

16 to 23 (GPTASGKS) is a binding site for ATP. 18 to 23 (TASGKS) provides a ligand contact to substrate. Interaction with substrate tRNA stretches follow at residues 41–44 (DSAQ), 165–169 (QRIQR), and 247–252 (RCVGYR).

Belongs to the IPP transferase family. As to quaternary structure, monomer. It depends on Mg(2+) as a cofactor.

The enzyme catalyses adenosine(37) in tRNA + dimethylallyl diphosphate = N(6)-dimethylallyladenosine(37) in tRNA + diphosphate. Catalyzes the transfer of a dimethylallyl group onto the adenine at position 37 in tRNAs that read codons beginning with uridine, leading to the formation of N6-(dimethylallyl)adenosine (i(6)A). This is tRNA dimethylallyltransferase from Nitrosomonas eutropha (strain DSM 101675 / C91 / Nm57).